The following is a 74-amino-acid chain: UPF0435 protein GWCH70_0415 (74 aa).

This sequence belongs to the UPF0435 family.

This is UPF0435 protein GWCH70_0415 from Geobacillus sp. (strain WCH70).